Consider the following 365-residue polypeptide: Alanine racemase (365 aa).

Lys-35 (proton acceptor; specific for D-alanine) is an active-site residue. Lys-35 is subject to N6-(pyridoxal phosphate)lysine. A substrate-binding site is contributed by Arg-130. The Proton acceptor; specific for L-alanine role is filled by Tyr-256. Met-304 provides a ligand contact to substrate.

It belongs to the alanine racemase family. Requires pyridoxal 5'-phosphate as cofactor.

The catalysed reaction is L-alanine = D-alanine. The protein operates within amino-acid biosynthesis; D-alanine biosynthesis; D-alanine from L-alanine: step 1/1. In terms of biological role, catalyzes the interconversion of L-alanine and D-alanine. May also act on other amino acids. The polypeptide is Alanine racemase (alr) (Polaromonas naphthalenivorans (strain CJ2)).